A 61-amino-acid chain; its full sequence is Small ribosomal subunit protein uS14 (61 aa).

Zn(2+) is bound by residues cysteine 24, cysteine 27, cysteine 40, and cysteine 43.

The protein belongs to the universal ribosomal protein uS14 family. Zinc-binding uS14 subfamily. In terms of assembly, part of the 30S ribosomal subunit. Contacts proteins S3 and S10. Zn(2+) is required as a cofactor.

Functionally, binds 16S rRNA, required for the assembly of 30S particles and may also be responsible for determining the conformation of the 16S rRNA at the A site. This Clostridium beijerinckii (strain ATCC 51743 / NCIMB 8052) (Clostridium acetobutylicum) protein is Small ribosomal subunit protein uS14.